Reading from the N-terminus, the 313-residue chain is Probable alpha-L-glutamate ligase (313 aa).

The ATP-grasp domain occupies 112 to 294; sequence LQMLMAQGIA…IALQMIVHLE (183 aa). ATP-binding positions include Lys-148, 185 to 186, Asp-194, and 218 to 220; these read EF and RAN. Positions 255, 267, and 269 each coordinate Mg(2+). The Mn(2+) site is built by Asp-255, Glu-267, and Asn-269.

Belongs to the RimK family. It depends on Mg(2+) as a cofactor. The cofactor is Mn(2+).

The polypeptide is Probable alpha-L-glutamate ligase (Pasteurella multocida (strain Pm70)).